A 331-amino-acid polypeptide reads, in one-letter code: Protein FLX-like 1 (331 aa).

Residues 1–51 are disordered; it reads MSGRNRGPPPPSMKGGSYSGLQAPVHQPPFVRGLGGGPVPPPPHPSMIDDS. A coiled-coil region spans residues 69–252; sequence ILEDRLAAQN…AEIANSETSA (184 aa). Positions 306–321 are enriched in low complexity; it reads QAAWAGGYDPQQQQQQ. The tract at residues 306-331 is disordered; sequence QAAWAGGYDPQQQQQQQPPPQGQGHR. The segment covering 322 to 331 has biased composition (pro residues); that stretch reads QPPPQGQGHR.

Belongs to the FLX family. Interacts with FRI.

Has no transcriptional activation activity. This Arabidopsis thaliana (Mouse-ear cress) protein is Protein FLX-like 1 (FLXL1).